The sequence spans 347 residues: Phosphoribosylformylglycinamidine cyclo-ligase (347 aa).

This sequence belongs to the AIR synthase family.

The protein localises to the cytoplasm. It carries out the reaction 2-formamido-N(1)-(5-O-phospho-beta-D-ribosyl)acetamidine + ATP = 5-amino-1-(5-phospho-beta-D-ribosyl)imidazole + ADP + phosphate + H(+). Its pathway is purine metabolism; IMP biosynthesis via de novo pathway; 5-amino-1-(5-phospho-D-ribosyl)imidazole from N(2)-formyl-N(1)-(5-phospho-D-ribosyl)glycinamide: step 2/2. The polypeptide is Phosphoribosylformylglycinamidine cyclo-ligase (Prochlorococcus marinus (strain MIT 9312)).